The following is a 317-amino-acid chain: Acetyl-coenzyme A carboxylase carboxyl transferase subunit alpha (317 aa).

The 255-residue stretch at 39 to 293 (RLESKAAAAL…EEAIAEGLAG (255 aa)) folds into the CoA carboxyltransferase C-terminal domain.

This sequence belongs to the AccA family. Acetyl-CoA carboxylase is a heterohexamer composed of biotin carboxyl carrier protein (AccB), biotin carboxylase (AccC) and two subunits each of ACCase subunit alpha (AccA) and ACCase subunit beta (AccD).

It is found in the cytoplasm. The enzyme catalyses N(6)-carboxybiotinyl-L-lysyl-[protein] + acetyl-CoA = N(6)-biotinyl-L-lysyl-[protein] + malonyl-CoA. The protein operates within lipid metabolism; malonyl-CoA biosynthesis; malonyl-CoA from acetyl-CoA: step 1/1. Functionally, component of the acetyl coenzyme A carboxylase (ACC) complex. First, biotin carboxylase catalyzes the carboxylation of biotin on its carrier protein (BCCP) and then the CO(2) group is transferred by the carboxyltransferase to acetyl-CoA to form malonyl-CoA. The chain is Acetyl-coenzyme A carboxylase carboxyl transferase subunit alpha from Methylobacterium sp. (strain 4-46).